The following is a 131-amino-acid chain: UPF0102 protein YraN (131 aa).

It belongs to the UPF0102 family.

This is UPF0102 protein YraN from Salmonella typhimurium (strain LT2 / SGSC1412 / ATCC 700720).